A 68-amino-acid chain; its full sequence is Protein SlyX homolog (68 aa).

This sequence belongs to the SlyX family.

This chain is Protein SlyX homolog, found in Pseudomonas fluorescens (strain Pf0-1).